Here is a 329-residue protein sequence, read N- to C-terminus: Sex comb on midleg-like protein 1 (329 aa).

Residues S138 and S238 each carry the phosphoserine modification. A disordered region spans residues 138-157; it reads SPTLPVSRRENNSPSNLPRP. The SAM domain occupies 258-325; the sequence is WSVEAVVLFL…YYIDRLKQGK (68 aa).

It belongs to the SCM family.

The protein resides in the nucleus. Its function is as follows. Putative Polycomb group (PcG) protein. PcG proteins act by forming multiprotein complexes, which are required to maintain the transcriptionally repressive state of homeotic genes throughout development. May be involved in spermatogenesis during sexual maturation. The polypeptide is Sex comb on midleg-like protein 1 (SCML1) (Gorilla gorilla gorilla (Western lowland gorilla)).